A 635-amino-acid chain; its full sequence is 5-aminolevulinate synthase, non-specific, mitochondrial (635 aa).

Residues 1–56 constitute a mitochondrion transit peptide; the sequence is MEAVVRRCPFLARVSQAFLQKAGPSLLFYAQHCPKMMEAAPPAAARGLATSASRGQ. Over residues 44 to 66 the composition is skewed to low complexity; the sequence is AARGLATSASRGQQVEETPAAQP. A disordered region spans residues 44 to 94; it reads AARGLATSASRGQQVEETPAAQPEAKKAKEVAQQNTDGSQPPAGHPPAAAV. Substrate contacts are provided by R212, S329, and K348. Pyridoxal 5'-phosphate-binding residues include S381, H409, and T437. The active site involves K440. K440 carries the post-translational modification N6-(pyridoxal phosphate)lysine. Positions 469 and 470 each coordinate pyridoxal 5'-phosphate. T557 is a substrate binding site.

This sequence belongs to the class-II pyridoxal-phosphate-dependent aminotransferase family. In terms of assembly, homodimer. Pyridoxal 5'-phosphate serves as cofactor. Ubiquitous.

The protein localises to the mitochondrion inner membrane. The catalysed reaction is succinyl-CoA + glycine + H(+) = 5-aminolevulinate + CO2 + CoA. Its pathway is porphyrin-containing compound metabolism; protoporphyrin-IX biosynthesis; 5-aminolevulinate from glycine: step 1/1. Functionally, catalyzes the pyridoxal 5'-phosphate (PLP)-dependent condensation of succinyl-CoA and glycine to form aminolevulinic acid (ALA), with CoA and CO2 as by-products. This Gallus gallus (Chicken) protein is 5-aminolevulinate synthase, non-specific, mitochondrial (ALAS1).